The sequence spans 325 residues: Casein kinase I isoform alpha (325 aa).

An N-acetylalanine modification is found at A2. At S4 the chain carries Phosphoserine. K8 carries the post-translational modification N6-acetyllysine. The 269-residue stretch at Y17–F285 folds into the Protein kinase domain. Residues I23–I31 and K46 contribute to the ATP site. The active-site Proton acceptor is the D136.

It belongs to the protein kinase superfamily. CK1 Ser/Thr protein kinase family. Casein kinase I subfamily. In terms of assembly, interacts with the Axin complex. Interacts with TUT1, leading to TUT1 phosphorylation. Interacts with FAM83A, FAM83B, FAM83C, FAM83D, FAM83E, FAM83F, FAM83G and FAM83H (via DUF1669). Interaction with FAM83H recruits CSNK1A1 to keratin filaments. Phosphorylated by MTOR in response to mitogenic stimulation, leading to its activation.

The protein resides in the cytoplasm. The protein localises to the cytoskeleton. It localises to the microtubule organizing center. It is found in the centrosome. Its subcellular location is the chromosome. The protein resides in the centromere. The protein localises to the kinetochore. It localises to the nucleus speckle. It is found in the cilium basal body. Its subcellular location is the spindle. It catalyses the reaction L-seryl-[protein] + ATP = O-phospho-L-seryl-[protein] + ADP + H(+). The catalysed reaction is L-threonyl-[protein] + ATP = O-phospho-L-threonyl-[protein] + ADP + H(+). Casein kinases are operationally defined by their preferential utilization of acidic proteins such as caseins as substrates. Can phosphorylate a large number of proteins. Participates in Wnt signaling. Phosphorylates CTNNB1 at 'Ser-45'. May phosphorylate PER1 and PER2. May play a role in segregating chromosomes during mitosis. May play a role in keratin cytoskeleton disassembly and thereby, it may regulate epithelial cell migration. Acts as a positive regulator of mTORC1 and mTORC2 signaling in response to nutrients by mediating phosphorylation of DEPTOR inhibitor. Acts as an inhibitor of NLRP3 inflammasome assembly by mediating phosphorylation of NLRP3. This is Casein kinase I isoform alpha (CSNK1A1) from Oryctolagus cuniculus (Rabbit).